The primary structure comprises 715 residues: SANT and BTB domain regulator of class switch recombination (715 aa).

In terms of domain architecture, SANT spans 21–59 (DMILCSLVGVPQPISWDSVARLVPGYTPKECAKRFEELK). The region spanning 146–254 (MVIHVCDEAK…ECIRYCHKNM (109 aa)) is the BTB domain. Over residues 552–573 (SEEEDYTTGSEVTEDEVGDEEE) the composition is skewed to acidic residues. Disordered stretches follow at residues 552 to 623 (SEEE…VSLQ) and 689 to 715 (SAHSNTRQMNTEKIPRPKPRFGTGRPT). A compositionally biased stretch (basic residues) spans 578–605 (QAGRKVKPKRSAKQTKKHISSPSIHKKE). 2 stretches are compositionally biased toward polar residues: residues 614 to 623 (DSSPFTVSLQ) and 690 to 699 (AHSNTRQMNT).

Belongs to the KIAA1841 family. In terms of assembly, homodimer.

Functionally, negatively regulates class switch recombination or isotype switching in splenic B-cells. The chain is SANT and BTB domain regulator of class switch recombination from Xenopus laevis (African clawed frog).